The chain runs to 306 residues: Curved DNA-binding protein (306 aa).

The J domain occupies 5 to 69; that stretch reads DYYAIMGVKP…QRRAEYDQLW (65 aa).

The protein resides in the cytoplasm. It is found in the nucleoid. DNA-binding protein that preferentially recognizes a curved DNA sequence. It is probably a functional analog of DnaJ; displays overlapping activities with DnaJ, but functions under different conditions, probably acting as a molecular chaperone in an adaptive response to environmental stresses other than heat shock. Lacks autonomous chaperone activity; binds native substrates and targets them for recognition by DnaK. Its activity is inhibited by the binding of CbpM. This chain is Curved DNA-binding protein, found in Salmonella paratyphi A (strain ATCC 9150 / SARB42).